The primary structure comprises 32 residues: ATP synthase 28 kDa subunit, mitochondrial (32 aa).

Its subcellular location is the mitochondrion. It localises to the mitochondrion inner membrane. Mitochondrial membrane ATP synthase (F(1)F(0) ATP synthase or Complex V) produces ATP from ADP in the presence of a proton gradient across the membrane which is generated by electron transport complexes of the respiratory chain. F-type ATPases consist of two structural domains, F(1) - containing the extramembraneous catalytic core and F(0) - containing the membrane proton channel, linked together by a central stalk and a peripheral stalk. During catalysis, ATP synthesis in the catalytic domain of F(1) is coupled via a rotary mechanism of the central stalk subunits to proton translocation. Part of the complex F(0) domain. The polypeptide is ATP synthase 28 kDa subunit, mitochondrial (Spinacia oleracea (Spinach)).